The following is a 938-amino-acid chain: Translation initiation factor IF-2 (938 aa).

Residues 55–322 (KAEASAAPAA…RKSKRARRQE (268 aa)) form a disordered region. 2 stretches are compositionally biased toward low complexity: residues 57–68 (EASAAPAAPAEK) and 77–117 (KKAA…AAAP). Positions 118–136 (KPGPKPAPVAEQPAPPAEP) are enriched in pro residues. 3 stretches are compositionally biased toward low complexity: residues 141–153 (APEA…APAA), 180–198 (GMGR…AGDN), and 224–233 (MMPKSPSAFG). Residues 247–293 (PGRGGAPGRGGAPGRGGVGTGAPGRGGAPGGGFGPSGGGRPGGGRPG) are compositionally biased toward gly residues. Over residues 310 to 319 (RRGRKSKRAR) the composition is skewed to basic residues. In terms of domain architecture, tr-type G spans 431-603 (ARPPVVTVMG…VVLTADASLD (173 aa)). The G1 stretch occupies residues 440–447 (GHVDHGKT). 440 to 447 (GHVDHGKT) contacts GTP. A G2 region spans residues 465-469 (GITQH). Residues 490 to 493 (DTPG) are G3. GTP is bound by residues 490–494 (DTPGH) and 544–547 (NKID). Positions 544–547 (NKID) are G4. The segment at 580–582 (SAK) is G5.

Belongs to the TRAFAC class translation factor GTPase superfamily. Classic translation factor GTPase family. IF-2 subfamily.

Its subcellular location is the cytoplasm. In terms of biological role, one of the essential components for the initiation of protein synthesis. Protects formylmethionyl-tRNA from spontaneous hydrolysis and promotes its binding to the 30S ribosomal subunits. Also involved in the hydrolysis of GTP during the formation of the 70S ribosomal complex. This is Translation initiation factor IF-2 from Nocardioides sp. (strain ATCC BAA-499 / JS614).